The primary structure comprises 486 residues: Membrane-bound lytic murein transglycosylase F (486 aa).

A signal peptide spans methionine 1–aspartate 29. The non-LT domain stretch occupies residues lysine 30–valine 267. The tract at residues aspartate 268–leucine 486 is LT domain. Glutamate 314 is a catalytic residue.

This sequence in the N-terminal section; belongs to the bacterial solute-binding protein 3 family. The protein in the C-terminal section; belongs to the transglycosylase Slt family.

It is found in the cell outer membrane. The catalysed reaction is Exolytic cleavage of the (1-&gt;4)-beta-glycosidic linkage between N-acetylmuramic acid (MurNAc) and N-acetylglucosamine (GlcNAc) residues in peptidoglycan, from either the reducing or the non-reducing ends of the peptidoglycan chains, with concomitant formation of a 1,6-anhydrobond in the MurNAc residue.. Functionally, murein-degrading enzyme that degrades murein glycan strands and insoluble, high-molecular weight murein sacculi, with the concomitant formation of a 1,6-anhydromuramoyl product. Lytic transglycosylases (LTs) play an integral role in the metabolism of the peptidoglycan (PG) sacculus. Their lytic action creates space within the PG sacculus to allow for its expansion as well as for the insertion of various structures such as secretion systems and flagella. This Pseudomonas fluorescens (strain Pf0-1) protein is Membrane-bound lytic murein transglycosylase F.